The chain runs to 161 residues: Probable chemoreceptor glutamine deamidase CheD (161 aa).

The protein belongs to the CheD family.

It carries out the reaction L-glutaminyl-[protein] + H2O = L-glutamyl-[protein] + NH4(+). In terms of biological role, probably deamidates glutamine residues to glutamate on methyl-accepting chemotaxis receptors (MCPs), playing an important role in chemotaxis. This chain is Probable chemoreceptor glutamine deamidase CheD, found in Thermococcus kodakarensis (strain ATCC BAA-918 / JCM 12380 / KOD1) (Pyrococcus kodakaraensis (strain KOD1)).